We begin with the raw amino-acid sequence, 178 residues long: Co-chaperone protein p23-1 (178 aa).

One can recognise a CS domain in the interval 2 to 91 (SRHPTVKWAQ…AESKWWNRLT (90 aa)). Composition is skewed to acidic residues over residues 112-126 (DDEDKGGEGDMDFGD) and 136-155 (DTDEIGEEVAEEDGDGEGET). A disordered region spans residues 112 to 178 (DDEDKGGEGD…DEEGVNAKKD (67 aa)). The segment covering 157 to 178 (AETKEKKIDGEKDEEGVNAKKD) has biased composition (basic and acidic residues).

Belongs to the p23/wos2 family. In terms of assembly, interacts with HSP90 in an ATP-dependent manner.

Functionally, acts as a co-chaperone for HSP90. The sequence is that of Co-chaperone protein p23-1 from Brassica napus (Rape).